Here is a 493-residue protein sequence, read N- to C-terminus: Fizzy-related protein homolog (493 aa).

Disordered stretches follow at residues 31–51 (LTPA…FIPS), 64–88 (INEN…GKDG), and 105–166 (EKVQ…SPRK). Phosphothreonine is present on Thr-32. Positions 32 to 42 (TPANSPVSSPS) are enriched in polar residues. Ser-36 is subject to Phosphoserine. Lys-69 carries the N6-acetyllysine modification. 2 stretches are compositionally biased toward basic and acidic residues: residues 76–86 (KAKDATSDNGK) and 106–126 (KVQD…EHKG). Phosphoserine is present on residues Ser-133, Ser-138, Ser-146, and Ser-151. Over residues 146-160 (SPYSLSPVSNKSQKL) the composition is skewed to polar residues. Lys-159 carries the N6-acetyllysine modification. WD repeat units follow at residues 182 to 222 (PELQ…VTRL), 227 to 266 (VEGD…KLSM), 269 to 306 (GHTA…LQSE), 311 to 350 (GHRQ…PVQQ), 353 to 395 (EHLA…PLQC), 397 to 438 (DTGS…QVAK), and 441 to 480 (GHSY…RSTK).

It belongs to the WD repeat CDC20/Fizzy family. As to quaternary structure, the unphosphorylated form interacts with APC/C during mitosis. Interacts with NINL. Interacts (in complex with the anaphase promoting complex APC) with MAD2L2; inhibits FZR1-mediated APC/C activation. Interacts with SIRT2. Interacts with USP37. Interacts (via WD repeats) with MAK. Interacts with RBBP8/CtIP; this interaction leads to RBBP8 proteasomal degradation. Interacts with HECW2. Interacts with SASS6; the interaction is regulated by CENATAC and leads to SASS6 proteasomal degradation. Interacts (via N-terminus) with CCNF. Interacts with CDC6. Interacts with TK1 (via the KEN box). Post-translationally, acetylated. Deacetylated by SIRT2 at Lys-69 and Lys-159; deacetylation enhances the interaction of FZR1 with CDC27, leading to activation of anaphase promoting complex/cyclosome (APC/C). Following DNA damage, it is dephosphorylated by CDC14B in G2 phase, leading to its reassociation with the APC/C, and allowing an efficient G2 DNA damage checkpoint. Phosphorylated by MAK.

It functions in the pathway protein modification; protein ubiquitination. Its function is as follows. Substrate-specific adapter for the anaphase promoting complex/cyclosome (APC/C) E3 ubiquitin-protein ligase complex. Associates with the APC/C in late mitosis, in replacement of CDC20, and activates the APC/C during anaphase and telophase. The APC/C remains active in degrading substrates to ensure that positive regulators of the cell cycle do not accumulate prematurely. At the G1/S transition FZR1 is phosphorylated, leading to its dissociation from the APC/C. Following DNA damage, it is required for the G2 DNA damage checkpoint: its dephosphorylation and reassociation with the APC/C leads to the ubiquitination of PLK1, preventing entry into mitosis. Acts as an adapter for APC/C to target the DNA-end resection factor RBBP8/CtIP for ubiquitination and subsequent proteasomal degradation. Through the regulation of RBBP8/CtIP protein turnover, may play a role in DNA damage response, favoring DNA double-strand repair through error-prone non-homologous end joining (NHEJ) over error-free, RBBP8-mediated homologous recombination (HR). The protein is Fizzy-related protein homolog (Fzr1) of Mus musculus (Mouse).